We begin with the raw amino-acid sequence, 193 residues long: Penicillin-binding protein activator LpoB (193 aa).

An N-terminal signal peptide occupies residues 1–16 (MKKYLGVILAALVLTG). Cysteine 17 carries N-palmitoyl cysteine lipidation. The S-diacylglycerol cysteine moiety is linked to residue cysteine 17. A disordered region spans residues 17-55 (CPSRPPEPTEPPATIEPVEPQVPTTPTLPPGESVPQPPK). The segment covering 28-41 (PATIEPVEPQVPTT) has biased composition (low complexity).

Belongs to the LpoB family. In terms of assembly, interacts with PBP1b.

It localises to the cell outer membrane. Regulator of peptidoglycan synthesis that is essential for the function of penicillin-binding protein 1B (PBP1b). This Pectobacterium carotovorum subsp. carotovorum (strain PC1) protein is Penicillin-binding protein activator LpoB.